The chain runs to 512 residues: MRCNIKRLFTLAIGVFAATLVIISFSKDNYEREWKQGPQSNEARAVGHQSPDLFPVGQNSLPHQPIPPSLGEKDLSDPFNFLFSSNKITLRKLYDLTKNVDFDQLRQNECKKNITLSKFWEKSEQRNVPEDDNWERFYSNIGSCSVYSDDQMIDNLLHDLNTSPIKHVHIMDGGTQVKFVFTFKNDKQAVFKPMRFGRDYESDPNHFYFSDFERHHAEIATFHLDRVLGFRRAIPTVGRVLNMTTELFEKAEKKLKKTFFFSPAKNFCFVSRCDYYCDTTHAICGLPDMKEGSVQVFLPDESAVPRKHNRSPYRRTYSKKNQVAEWQSSMNYCTDKVKTKRQYAHGRRLLDLVDIHILDYLIGNQDRHHFESFNVFNDLPSYAIHLDHGRAFGRSDFDDDDIILPLRQCCILRPSTFQTLMNFYSTPKSLTKALHESLSKDPAHPILAYKHYPAMERRLAKIMSHILECFESRGVAEVLVAEYNNPDVSDAEQNDEEQSEEHQDKKDDKKTV.

Residues 1-6 (MRCNIK) lie on the Cytoplasmic side of the membrane. A helical; Signal-anchor for type II membrane protein membrane pass occupies residues 7 to 26 (RLFTLAIGVFAATLVIISFS). Residues 27–512 (KDNYEREWKQ…QDKKDDKKTV (486 aa)) are Lumenal-facing. The cysteines at positions 110 and 144 are disulfide-linked. Residue asparagine 113 is glycosylated (N-linked (GlcNAc...) asparagine). ATP contacts are provided by glutamine 176, lysine 192, and glutamate 213. Glutamate 213 is a binding site for Mn(2+). Asparagine 242 carries N-linked (GlcNAc...) asparagine glycosylation. 2 disulfide bridges follow: cysteine 268/cysteine 284 and cysteine 273/cysteine 277. An ATP-binding site is contributed by 295–298 (QVFL). Disulfide bonds link cysteine 333/cysteine 409 and cysteine 410/cysteine 469. Aspartate 366 is an active-site residue. Residues glutamate 371 and aspartate 387 each coordinate ATP. Position 387 (aspartate 387) interacts with Mn(2+). Residues 486–512 (PDVSDAEQNDEEQSEEHQDKKDDKKTV) form a disordered region. Positions 489 to 499 (SDAEQNDEEQS) are enriched in acidic residues. Residues 500–512 (EEHQDKKDDKKTV) show a composition bias toward basic and acidic residues.

This sequence belongs to the FAM20 family. Mn(2+) is required as a cofactor.

Its subcellular location is the golgi apparatus membrane. The protein resides in the secreted. The catalysed reaction is L-seryl-[protein] + ATP = O-phospho-L-seryl-[protein] + ADP + H(+). The enzyme catalyses L-threonyl-[protein] + ATP = O-phospho-L-threonyl-[protein] + ADP + H(+). Functionally, golgi serine/threonine protein kinase that phosphorylates secretory pathway proteins within Ser-x-Glu/pSer motifs. The polypeptide is Extracellular serine/threonine protein kinase CeFam20 (Caenorhabditis elegans).